A 570-amino-acid chain; its full sequence is Hydroxylamine reductase (570 aa).

4 residues coordinate [4Fe-4S] cluster: cysteine 5, cysteine 8, cysteine 17, and cysteine 23. Hybrid [4Fe-2O-2S] cluster is bound by residues histidine 266, glutamate 290, cysteine 334, cysteine 425, cysteine 453, cysteine 478, glutamate 513, and lysine 515. Cysteine 425 carries the post-translational modification Cysteine persulfide.

It belongs to the HCP family. [4Fe-4S] cluster serves as cofactor. Requires hybrid [4Fe-2O-2S] cluster as cofactor.

Its subcellular location is the cytoplasm. It carries out the reaction A + NH4(+) + H2O = hydroxylamine + AH2 + H(+). Functionally, catalyzes the reduction of hydroxylamine to form NH(3) and H(2)O. The protein is Hydroxylamine reductase of Clostridium tetani (strain Massachusetts / E88).